Reading from the N-terminus, the 414-residue chain is 3-aminobutyryl-CoA aminotransferase (414 aa).

Position 261 is an N6-(pyridoxal phosphate)lysine (Lys-261).

The protein belongs to the class-III pyridoxal-phosphate-dependent aminotransferase family. As to quaternary structure, homodimer. Pyridoxal 5'-phosphate is required as a cofactor.

The catalysed reaction is (3S)-3-aminobutanoyl-CoA + 2-oxoglutarate = acetoacetyl-CoA + L-glutamate. The protein operates within amino-acid degradation; L-lysine degradation via acetate pathway. Functionally, 3-aminobutyryl-CoA aminotransferase that acts specifically on coenzyme A (CoA) esters and catalyzes the conversion of 3-aminobutyryl-CoA into acetoacetyl-CoA in an alternative pathway of lysine fermentation. This chain is 3-aminobutyryl-CoA aminotransferase (kat), found in Cloacimonas acidaminovorans (strain Evry).